The chain runs to 325 residues: Ubiquitin thioesterase OTU1 (325 aa).

The tract at residues 7 to 86 (RIRSKTGVEN…NVSSISSNPG (80 aa)) is UBX-like. One can recognise an OTU domain in the interval 123 to 246 (ATRRVTDDDN…GIHYDALSIC (124 aa)). The segment at 128–134 (TDDDNSC) is cys-loop. D131 is a catalytic residue. C134 acts as the Nucleophile in catalysis. Positions 185–195 (IQNPKNWGGAI) are variable-loop. Residues 235–239 (YDGIH) form a his-loop region. Residue I238 participates in substrate binding. Residue H239 is part of the active site. The segment at 265-270 (KDSLAK) is S2 site. The segment at 292 to 316 (LICLNCNKTLKGEKEAAIHASTTGH) adopts a C2H2-type zinc-finger fold. Residue H316 is part of the active site.

It is found in the cytoplasm. It carries out the reaction Thiol-dependent hydrolysis of ester, thioester, amide, peptide and isopeptide bonds formed by the C-terminal Gly of ubiquitin (a 76-residue protein attached to proteins as an intracellular targeting signal).. Its function is as follows. Hydrolase that can remove conjugated ubiquitin from proteins and may therefore play an important regulatory role at the level of protein turnover by preventing degradation. The protein is Ubiquitin thioesterase OTU1 (yod1) of Dictyostelium discoideum (Social amoeba).